A 660-amino-acid chain; its full sequence is MEVSGPEDDPFLSQLHQVQCPVCQQMMPAAHINSHLDRCLLLHPAGHAEPAAGSHRAGERAKGPSPPGAKRRRLSESSALKQPATPTAAESSEGEGEEGDDGGETESRESYDAPPTPSGARLIPDFPVARSSSPARKGMGKRPAAAAAAGSASPRSWDEAEAQEEEEAGVDGDGDADVDGEDDPGHWDADAADASFGVSAGRAHPRALAAEEIRQMLEGKPLADKMRPDTLQDYIGQSRAVGQETLLRSLLEANEIPSLILWGPPGCGKTTLAHIIANNSKKHSIRFVTLSATNAKTNDVRDVIKQAQNEKSFFKRKTILFIDEIHRFNKSQQDTFLPHVECGTITLIGATTENPSFQVNAALLSRCRVIVLEKLPVEAMVTILMRAINSLGIHVLDSSRPTDPLSHSSNCSSEPSVFIEDKAVDTLAYLSDGDARTGLNGLQLAVLARLSSRKVFCKKSGQTYSPSRVLITENDVKEGLQRSHILYDRAGEEHYNCISALHKAMRGSDQNASLYWLARMLEGGEDPLYVARRLVRFASEDIGLADPSALAQAVAAYQGCHFIGMPECEVLLAQCVVYFARAPKSIEVYSAYNNVKACLRSHQGPLPPVPLHLRNAPTRLMKDLGYGKGYKYNPMYSEPVDQDYLPEELRGVDFFKQRRC.

A UBZ4-type zinc finger spans residues 17-44; it reads QVQCPVCQQMMPAAHINSHLDRCLLLHP. Zn(2+) contacts are provided by Cys20, Cys23, His31, His35, and Cys39. The tract at residues 48–191 is disordered; it reads AEPAAGSHRA…DDPGHWDADA (144 aa). Phosphoserine occurs at positions 65 and 75. Polar residues predominate over residues 76–89; that stretch reads ESSALKQPATPTAA. Lys81 participates in a covalent cross-link: Glycyl lysine isopeptide (Lys-Gly) (interchain with G-Cter in ubiquitin). Thr85 carries the post-translational modification Phosphothreonine. Phosphoserine occurs at positions 91 and 92. Residues 92 to 104 show a composition bias toward acidic residues; sequence SEGEGEEGDDGGE. The residue at position 116 (Thr116) is a Phosphothreonine. Low complexity predominate over residues 135-155; that stretch reads ARKGMGKRPAAAAAAGSASPR. Residue Lys141 forms a Glycyl lysine isopeptide (Lys-Gly) (interchain with G-Cter in ubiquitin) linkage. Ser153 bears the Phosphoserine mark. The segment covering 159 to 182 has biased composition (acidic residues); sequence EAEAQEEEEAGVDGDGDADVDGED. Residue Lys220 forms a Glycyl lysine isopeptide (Lys-Gly) (interchain with G-Cter in ubiquitin) linkage. ATP is bound at residue 265-271; that stretch reads PGCGKTT. Residues Lys296, Lys305, Lys311, Lys317, and Lys330 each participate in a glycyl lysine isopeptide (Lys-Gly) (interchain with G-Cter in ubiquitin) cross-link. Residue Lys477 forms a Glycyl lysine isopeptide (Lys-Gly) (interchain with G-Cter in SUMO2); alternate linkage. A Glycyl lysine isopeptide (Lys-Gly) (interchain with G-Cter in ubiquitin); alternate cross-link involves residue Lys477. Residues Tyr529 and Tyr557 each carry the phosphotyrosine modification. Lys622 is covalently cross-linked (Glycyl lysine isopeptide (Lys-Gly) (interchain with G-Cter in ubiquitin)). Residue Lys628 forms a Glycyl lysine isopeptide (Lys-Gly) (interchain with G-Cter in ubiquitin); alternate linkage. N6-acetyllysine; alternate is present on Lys628. Residue Lys631 forms a Glycyl lysine isopeptide (Lys-Gly) (interchain with G-Cter in ubiquitin) linkage.

Belongs to the AAA ATPase family. RarA/MGS1/WRNIP1 subfamily. Forms homooligomers, possibly octamers. Directly interacts with POLD1, POLD2 and POLD4. Interacts with the N-terminal domain of WRN. Interacts (via UBZ4-type zinc finger) with monoubiquitin and polyubiquitin. Interacts with TRIM14 and PPP6C; these interactions positively regulate the RIGI signaling pathway. Post-translationally, sumoylated with SUMO1 and SUMO2/3. As to expression, ubiquitously expressed.

It is found in the nucleus. The protein resides in the cytoplasm. The catalysed reaction is ATP + H2O = ADP + phosphate + H(+). Its function is as follows. Functions as a modulator of initiation or reinitiation events during DNA polymerase delta-mediated DNA synthesis. In the presence of ATP, stimulation of DNA polymerase delta-mediated DNA synthesis is decreased. Also plays a role in the innate immune defense against viruses. Stabilizes the RIGI dsRNA interaction and promotes RIGI 'Lys-63'-linked polyubiquitination. In turn, RIGI transmits the signal through mitochondrial MAVS. This chain is ATPase WRNIP1, found in Mus musculus (Mouse).